A 277-amino-acid polypeptide reads, in one-letter code: MWPLALVIASLTLALSGGVSQESSKVLNTNGTSGFLPGGYTCFPHSQPWQAALLVQGRLLCGGVLVHPKWVLTAAHCLKEGLKVYLGKHALGRVEAGEQVREVVHSIPHPEYRRSPTHLNHDHDIMLLELQSPVQLTGYIQTLPLSHNNRLTPGTTCRVSGWGTTTSPQVNYPKTLQCANIQLRSDEECRQVYPGKITDNMLCAGTKEGGKDSCEGDSGGPLVCNRTLYGIVSWGDFPCGQPDRPGVYTRVSRYVLWIRETIRKYETQQQKWLKGPQ.

An N-terminal signal peptide occupies residues Met-1–Ser-16. Asn-30 carries N-linked (GlcNAc...) asparagine glycosylation. Residues Leu-36 to Arg-263 form the Peptidase S1 domain. 5 disulfide bridges follow: Cys-42–Cys-178, Cys-61–Cys-77, Cys-157–Cys-224, Cys-189–Cys-203, and Cys-214–Cys-239. Active-site charge relay system residues include His-76 and Asp-124. Catalysis depends on Ser-218, which acts as the Charge relay system. A glycan (N-linked (GlcNAc...) asparagine) is linked at Asn-225.

This sequence belongs to the peptidase S1 family. Kallikrein subfamily. In terms of tissue distribution, expressed in prostate, breast, testis and salivary gland.

The protein resides in the secreted. The protein is Kallikrein-13 (KLK13) of Homo sapiens (Human).